A 161-amino-acid chain; its full sequence is Ubiquitin-conjugating enzyme 15 (161 aa).

The UBC core domain maps to 15–161 (IACNRLQKEL…TRWWFHDDKV (147 aa)). Cys-99 serves as the catalytic Glycyl thioester intermediate.

It belongs to the ubiquitin-conjugating enzyme family.

It catalyses the reaction S-ubiquitinyl-[E1 ubiquitin-activating enzyme]-L-cysteine + [E2 ubiquitin-conjugating enzyme]-L-cysteine = [E1 ubiquitin-activating enzyme]-L-cysteine + S-ubiquitinyl-[E2 ubiquitin-conjugating enzyme]-L-cysteine.. It functions in the pathway protein modification; protein ubiquitination. In terms of biological role, accepts the ubiquitin from the E1 complex and catalyzes its covalent attachment to other proteins. The polypeptide is Ubiquitin-conjugating enzyme 15 (UBC15) (Arabidopsis thaliana (Mouse-ear cress)).